Here is a 533-residue protein sequence, read N- to C-terminus: Pre-mRNA-splicing factor cwf24 (533 aa).

Positions 1 to 17 are enriched in polar residues; sequence MEQKNLNINQASGSKIN. Positions 1 to 69 are disordered; the sequence is MEQKNLNINQ…MRDNIPIVSG (69 aa). Residues 27 to 43 show a composition bias toward basic residues; it reads SRRRHRPRQGLKRKKGF. The C3H1-type zinc finger occupies 184 to 212; that stretch reads DYQPDVCKDYKLTGYCGYGDTCKFLHMRE. An RING-type zinc finger spans residues 254–292; it reads CLICKKDYRSPIATTCGHHFCEQCAITRYRKTPTCIQCG. The N-acetyltransferase domain maps to 379–524; the sequence is YFIREITESN…SAFYMVCPLS (146 aa).

Belongs to the CWC24 family. As to quaternary structure, belongs to the 40S cdc5-associated complex (or cwf complex), a spliceosome sub-complex reminiscent of a late-stage spliceosome composed of the U2, U5 and U6 snRNAs and at least brr2, cdc5, cwf2/prp3, cwf3/syf1, cwf4/syf3, cwf5/ecm2, spp42/cwf6, cwf7/spf27, cwf8, cwf9, cwf10, cwf11, cwf12, prp45/cwf13, cwf14, cwf15, cwf16, cwf17, cwf18, cwf19, cwf20, cwf21, cwf22, cwf23, cwf24, cwf25, cwf26, cyp7/cwf27, cwf28, cwf29/ist3, lea1, msl1, prp5/cwf1, prp10, prp12/sap130, prp17, prp22, sap61, sap62, sap114, sap145, slu7, smb1, smd1, smd3, smf1, smg1 and syf2.

The protein localises to the nucleus. Functionally, involved in mRNA splicing. The protein is Pre-mRNA-splicing factor cwf24 (cwf24) of Schizosaccharomyces pombe (strain 972 / ATCC 24843) (Fission yeast).